Reading from the N-terminus, the 160-residue chain is SsrA-binding protein (160 aa).

This sequence belongs to the SmpB family.

The protein localises to the cytoplasm. Required for rescue of stalled ribosomes mediated by trans-translation. Binds to transfer-messenger RNA (tmRNA), required for stable association of tmRNA with ribosomes. tmRNA and SmpB together mimic tRNA shape, replacing the anticodon stem-loop with SmpB. tmRNA is encoded by the ssrA gene; the 2 termini fold to resemble tRNA(Ala) and it encodes a 'tag peptide', a short internal open reading frame. During trans-translation Ala-aminoacylated tmRNA acts like a tRNA, entering the A-site of stalled ribosomes, displacing the stalled mRNA. The ribosome then switches to translate the ORF on the tmRNA; the nascent peptide is terminated with the 'tag peptide' encoded by the tmRNA and targeted for degradation. The ribosome is freed to recommence translation, which seems to be the essential function of trans-translation. This is SsrA-binding protein from Erwinia tasmaniensis (strain DSM 17950 / CFBP 7177 / CIP 109463 / NCPPB 4357 / Et1/99).